Here is a 72-residue protein sequence, read N- to C-terminus: Translation initiation factor IF-1 (72 aa).

Residues 2-72 form the S1-like domain; sequence AKEDCIEMQG…SKGRIIFRSR (71 aa).

The protein belongs to the IF-1 family. In terms of assembly, component of the 30S ribosomal translation pre-initiation complex which assembles on the 30S ribosome in the order IF-2 and IF-3, IF-1 and N-formylmethionyl-tRNA(fMet); mRNA recruitment can occur at any time during PIC assembly.

The protein resides in the cytoplasm. One of the essential components for the initiation of protein synthesis. Stabilizes the binding of IF-2 and IF-3 on the 30S subunit to which N-formylmethionyl-tRNA(fMet) subsequently binds. Helps modulate mRNA selection, yielding the 30S pre-initiation complex (PIC). Upon addition of the 50S ribosomal subunit IF-1, IF-2 and IF-3 are released leaving the mature 70S translation initiation complex. This Haemophilus influenzae (strain ATCC 51907 / DSM 11121 / KW20 / Rd) protein is Translation initiation factor IF-1.